A 498-amino-acid chain; its full sequence is ATP synthase subunit beta, chloroplastic (498 aa).

172 to 179 is an ATP binding site; that stretch reads GGAGVGKT.

Belongs to the ATPase alpha/beta chains family. In terms of assembly, F-type ATPases have 2 components, CF(1) - the catalytic core - and CF(0) - the membrane proton channel. CF(1) has five subunits: alpha(3), beta(3), gamma(1), delta(1), epsilon(1). CF(0) has four main subunits: a(1), b(1), b'(1) and c(9-12).

It is found in the plastid. The protein localises to the chloroplast thylakoid membrane. The catalysed reaction is ATP + H2O + 4 H(+)(in) = ADP + phosphate + 5 H(+)(out). In terms of biological role, produces ATP from ADP in the presence of a proton gradient across the membrane. The catalytic sites are hosted primarily by the beta subunits. The chain is ATP synthase subunit beta, chloroplastic from Calycanthus floridus (Eastern sweetshrub).